An 85-amino-acid polypeptide reads, in one-letter code: Large ribosomal subunit protein bL27 (85 aa).

This sequence belongs to the bacterial ribosomal protein bL27 family.

The chain is Large ribosomal subunit protein bL27 from Campylobacter concisus (strain 13826).